A 285-amino-acid chain; its full sequence is Hypersensitive-induced response protein 3 (285 aa).

Residue G2 is the site of N-myristoyl glycine attachment. Coiled-coil stretches lie at residues 113-139 (NLDDVFEQKNEIAKSVEEELDKAMTAY) and 165-185 (NAAARMRVAASEKAEAEKIIQ).

In terms of assembly, self-interacts and forms heteromers. Interacts with NB-LRR class of R proteins before R proteins (e.g. RPS2 or RPM1) are activated by the effectors.

Its subcellular location is the cell membrane. The sequence is that of Hypersensitive-induced response protein 3 (HIR3) from Arabidopsis thaliana (Mouse-ear cress).